We begin with the raw amino-acid sequence, 485 residues long: Glutamyl-tRNA(Gln) amidotransferase subunit A (485 aa).

Active-site charge relay system residues include Lys79 and Ser154. Catalysis depends on Ser178, which acts as the Acyl-ester intermediate.

This sequence belongs to the amidase family. GatA subfamily. Heterotrimer of A, B and C subunits.

The catalysed reaction is L-glutamyl-tRNA(Gln) + L-glutamine + ATP + H2O = L-glutaminyl-tRNA(Gln) + L-glutamate + ADP + phosphate + H(+). Functionally, allows the formation of correctly charged Gln-tRNA(Gln) through the transamidation of misacylated Glu-tRNA(Gln) in organisms which lack glutaminyl-tRNA synthetase. The reaction takes place in the presence of glutamine and ATP through an activated gamma-phospho-Glu-tRNA(Gln). In Staphylococcus aureus (strain MRSA252), this protein is Glutamyl-tRNA(Gln) amidotransferase subunit A.